Reading from the N-terminus, the 77-residue chain is Sec-independent protein translocase protein TatA (77 aa).

A helical transmembrane segment spans residues 2–22; sequence GFGGISIWQLLIILLIVVMLF. Composition is skewed to basic and acidic residues over residues 46-59 and 66-77; these read DNGEAEKPAVEEPK and QARKVEEPAKKD. A disordered region spans residues 46 to 77; it reads DNGEAEKPAVEEPKGQTIDAQARKVEEPAKKD.

It belongs to the TatA/E family. The Tat system comprises two distinct complexes: a TatABC complex, containing multiple copies of TatA, TatB and TatC subunits, and a separate TatA complex, containing only TatA subunits. Substrates initially bind to the TatABC complex, which probably triggers association of the separate TatA complex to form the active translocon.

Its subcellular location is the cell inner membrane. Functionally, part of the twin-arginine translocation (Tat) system that transports large folded proteins containing a characteristic twin-arginine motif in their signal peptide across membranes. TatA could form the protein-conducting channel of the Tat system. In Ectopseudomonas mendocina (strain ymp) (Pseudomonas mendocina), this protein is Sec-independent protein translocase protein TatA.